The following is a 564-amino-acid chain: Multidrug resistance protein 1 (564 aa).

Topologically, residues 1–115 (MHYRFLRDSF…NPQNWPTLQK (115 aa)) are cytoplasmic. The disordered stretch occupies residues 60 to 101 (IDNQGEPNSSQSSSSNNTIVDNNNNNDNDVDGDKIVVTWDGD). Residues 67-86 (NSSQSSSSNNTIVDNNNNND) are compositionally biased toward low complexity. Residues 116–136 (AFFIFQISFLTTSVYMGSAVY) traverse the membrane as a helical segment. Over 137 to 151 (TPGIEELMHDFGIGR) the chain is Extracellular. The chain crosses the membrane as a helical span at residues 152–172 (VVATLPLTLFVIGYGVGPLVF). Over 173–183 (SPMSENAIFGR) the chain is Cytoplasmic. Residues 184–204 (TSIYIITLFLFVILQIPTALV) traverse the membrane as a helical segment. Residues 205 to 206 (NN) lie on the Extracellular side of the membrane. Residues 207-227 (IAGLCILRFLGGFFASPCLAT) form a helical membrane-spanning segment. The Cytoplasmic portion of the chain corresponds to 228–242 (GGASVADVVKFWNLP). A helical membrane pass occupies residues 243–263 (VGLAAWSLGAVCGPSFGPFFG). At 264 to 273 (SILTVKASWR) the chain is on the extracellular side. Residues 274–294 (WTFWFMCIISGFSFVMLCFTL) traverse the membrane as a helical segment. Residues 295-350 (PETFGKTLLYRKAKRLRAITGNDRITSEGEVENSKMTSHELIIDTLWRPLEITVME) lie on the Cytoplasmic side of the membrane. A helical membrane pass occupies residues 351 to 371 (PVVLLINIYIAMVYSILYLFF). Residues 372-390 (EVFPIYFVGVKHFTLVELG) lie on the Extracellular side of the membrane. A helical membrane pass occupies residues 391–411 (TTYMSIVIGIVIAAFIYIPVI). The Cytoplasmic portion of the chain corresponds to 412-428 (RQKFTKPILRQEQVFPE). Residues 429–449 (VFIPIAIVGGILLTSGLFIFG) traverse the membrane as a helical segment. The Extracellular segment spans residues 450–455 (WSANRT). Asn453 carries an N-linked (GlcNAc...) asparagine glycan. Residues 456–476 (THWVGPLFGAATTASGAFLIF) traverse the membrane as a helical segment. Residues 477–503 (QTLFNFMGASFKPHYIASVFASNDLFR) lie on the Cytoplasmic side of the membrane. A helical transmembrane segment spans residues 504 to 524 (SVIASVFPLFGAPLFDNLATP). At 525 to 528 (EYPV) the chain is on the extracellular side. Residues 529 to 549 (AWGSSVLGFITLVMIAIPVLF) traverse the membrane as a helical segment. Topologically, residues 550–564 (YLNGPKLRARSKYAN) are cytoplasmic.

It belongs to the major facilitator superfamily. CAR1 family.

The protein localises to the cell membrane. Plasma membrane multidrug efflux pump that confers resistance to numerous chemicals including azoles such as fluconazole, voriconazole, and benztriazoles, as well as to benomyl, cycloheximide, methotrexate, 4-nitroquinoline-N-oxide, sulfometuron methyl, cerulenin, and brefeldin A. This is Multidrug resistance protein 1 from Candida albicans (strain SC5314 / ATCC MYA-2876) (Yeast).